Consider the following 361-residue polypeptide: Peptide chain release factor 1 (361 aa).

Gln237 carries the post-translational modification N5-methylglutamine. A compositionally biased stretch (basic and acidic residues) spans 287-297; that stretch reads KQQKEQSDTRK. A disordered region spans residues 287–313; that stretch reads KQQKEQSDTRKSLVGSGDRSERIRTYN.

The protein belongs to the prokaryotic/mitochondrial release factor family. Post-translationally, methylated by PrmC. Methylation increases the termination efficiency of RF1.

The protein localises to the cytoplasm. Peptide chain release factor 1 directs the termination of translation in response to the peptide chain termination codons UAG and UAA. The protein is Peptide chain release factor 1 of Francisella tularensis subsp. holarctica (strain FTNF002-00 / FTA).